The primary structure comprises 124 residues: Small ribosomal subunit protein uS13 (124 aa).

The interval 95 to 124 (GLPVRGQRTKTNARTRKGPKRTIAGKKKAR) is disordered.

It belongs to the universal ribosomal protein uS13 family. Part of the 30S ribosomal subunit. Forms a loose heterodimer with protein S19. Forms two bridges to the 50S subunit in the 70S ribosome.

Functionally, located at the top of the head of the 30S subunit, it contacts several helices of the 16S rRNA. In the 70S ribosome it contacts the 23S rRNA (bridge B1a) and protein L5 of the 50S subunit (bridge B1b), connecting the 2 subunits; these bridges are implicated in subunit movement. Contacts the tRNAs in the A and P-sites. This Mycobacterium sp. (strain JLS) protein is Small ribosomal subunit protein uS13.